A 1342-amino-acid chain; its full sequence is DNA-directed RNA polymerase subunit beta (1342 aa).

Belongs to the RNA polymerase beta chain family. In terms of assembly, the RNAP catalytic core consists of 2 alpha, 1 beta, 1 beta' and 1 omega subunit. When a sigma factor is associated with the core the holoenzyme is formed, which can initiate transcription.

The enzyme catalyses RNA(n) + a ribonucleoside 5'-triphosphate = RNA(n+1) + diphosphate. DNA-dependent RNA polymerase catalyzes the transcription of DNA into RNA using the four ribonucleoside triphosphates as substrates. This Glaesserella parasuis serovar 5 (strain SH0165) (Haemophilus parasuis) protein is DNA-directed RNA polymerase subunit beta.